The primary structure comprises 89 residues: Large ribosomal subunit protein bL27 (89 aa).

The tract at residues 1 to 26 (MAQKKAGGSSRNGRDSVGQRRGVKRF) is disordered.

Belongs to the bacterial ribosomal protein bL27 family.

This Desulfovibrio desulfuricans (strain ATCC 27774 / DSM 6949 / MB) protein is Large ribosomal subunit protein bL27.